A 250-amino-acid polypeptide reads, in one-letter code: DNA repair protein RecO (250 aa).

This sequence belongs to the RecO family.

In terms of biological role, involved in DNA repair and RecF pathway recombination. This chain is DNA repair protein RecO, found in Staphylococcus aureus (strain bovine RF122 / ET3-1).